A 468-amino-acid chain; its full sequence is MSSSLWLQCMQRLQEELPATEFSMWVRPLQAELNDNTLTLFAPNRFVLDWVRDKYLNSINRLLQEYCGHDIPNLRFEVGSRPVAAPKPAPTRTPADVAAESSAPAQLQARKPVHKTWDDDAQAIADINHRSNVNPKHKFNNFVEGKSNQLGLAAARQVADNPGGAYNPLFLYGGTGLGKTHLLHAVGNAIVDNKPNAKVVYMHSERFVQDMVKALQNNAIEEFKRYYRSVDALLIDDIQFFANKERSQEEFFHTFNALLEGNQQIILTSDRYPKEISGVEDRLKSRFGWGLTVAIEPPELETRVAILMKKAEDHQIHLADEVAFFIAKRLRSNVRELEGALNRVIANANFTGRPITIDFVREALRDLLALQEKLVTIDNIQKTVAEYYKIKVADLLSKRRSRSVARPRQLAMALAKELTNHSLPEIGDAFGGRDHTTVLHACRKIEQLREESHDIKEDYSNLIRTLSS.

Residues 1–84 (MSSSLWLQCM…RFEVGSRPVA (84 aa)) form a domain I, interacts with DnaA modulators region. The interval 81 to 113 (RPVAAPKPAPTRTPADVAAESSAPAQLQARKPV) is disordered. Residues 84–131 (AAPKPAPTRTPADVAAESSAPAQLQARKPVHKTWDDDAQAIADINHRS) form a domain II region. Residues 132-348 (NVNPKHKFNN…GALNRVIANA (217 aa)) are domain III, AAA+ region. ATP is bound by residues G176, G178, K179, and T180. Residues 349–468 (NFTGRPITID…YSNLIRTLSS (120 aa)) are domain IV, binds dsDNA.

The protein belongs to the DnaA family. In terms of assembly, oligomerizes as a right-handed, spiral filament on DNA at oriC.

The protein resides in the cytoplasm. Functionally, plays an essential role in the initiation and regulation of chromosomal replication. ATP-DnaA binds to the origin of replication (oriC) to initiate formation of the DNA replication initiation complex once per cell cycle. Binds the DnaA box (a 9 base pair repeat at the origin) and separates the double-stranded (ds)DNA. Forms a right-handed helical filament on oriC DNA; dsDNA binds to the exterior of the filament while single-stranded (ss)DNA is stabiized in the filament's interior. The ATP-DnaA-oriC complex binds and stabilizes one strand of the AT-rich DNA unwinding element (DUE), permitting loading of DNA polymerase. After initiation quickly degrades to an ADP-DnaA complex that is not apt for DNA replication. Binds acidic phospholipids. This is Chromosomal replication initiator protein DnaA from Vibrio vulnificus (strain CMCP6).